The sequence spans 410 residues: Multifunctional CCA protein (410 aa).

Positions 8 and 11 each coordinate ATP. Positions 8 and 11 each coordinate CTP. Asp21 and Asp23 together coordinate Mg(2+). Positions 91, 138, and 141 each coordinate ATP. Residues Arg91, Arg138, and Arg141 each coordinate CTP. The HD domain occupies Thr229–Asp347.

This sequence belongs to the tRNA nucleotidyltransferase/poly(A) polymerase family. Bacterial CCA-adding enzyme type 1 subfamily. As to quaternary structure, monomer. Can also form homodimers and oligomers. The cofactor is Mg(2+). It depends on Ni(2+) as a cofactor.

It carries out the reaction a tRNA precursor + 2 CTP + ATP = a tRNA with a 3' CCA end + 3 diphosphate. It catalyses the reaction a tRNA with a 3' CCA end + 2 CTP + ATP = a tRNA with a 3' CCACCA end + 3 diphosphate. Catalyzes the addition and repair of the essential 3'-terminal CCA sequence in tRNAs without using a nucleic acid template. Adds these three nucleotides in the order of C, C, and A to the tRNA nucleotide-73, using CTP and ATP as substrates and producing inorganic pyrophosphate. tRNA 3'-terminal CCA addition is required both for tRNA processing and repair. Also involved in tRNA surveillance by mediating tandem CCA addition to generate a CCACCA at the 3' terminus of unstable tRNAs. While stable tRNAs receive only 3'-terminal CCA, unstable tRNAs are marked with CCACCA and rapidly degraded. This is Multifunctional CCA protein from Xanthomonas campestris pv. campestris (strain B100).